The primary structure comprises 733 residues: Methylmalonyl-CoA mutase large subunit (733 aa).

The span at 1-10 shows a compositional bias: acidic residues; that stretch reads MRIPEFDDIE. The tract at residues 1-22 is disordered; sequence MRIPEFDDIELGAGGGPSGSAE. Tyr78, Met81, Thr88, Arg90, Tyr92, and Ser117 together coordinate (R)-methylmalonyl-CoA. Positions 120 and 142 each coordinate cob(II)alamin. (R)-methylmalonyl-CoA-binding residues include Thr198 and Gln200. Positions 209 and 210 each coordinate cob(II)alamin. Residues Arg210, His247, Arg286, and Ser288 each contribute to the (R)-methylmalonyl-CoA site. Residues Gly336, Glu373, Ala376, Gly612, His613, Asp614, Arg615, Ser658, Leu660, Gly689, and Thr712 each contribute to the cob(II)alamin site. The region spanning 600–732 is the B12-binding domain; it reads RPRILVAKMG…KRLAADLGHE (133 aa).

The protein belongs to the methylmalonyl-CoA mutase family. As to quaternary structure, heterodimer of an alpha and a beta chain. Adenosylcob(III)alamin is required as a cofactor.

It carries out the reaction (R)-methylmalonyl-CoA = succinyl-CoA. In terms of biological role, catalyzes the isomerization of succinyl-CoA to methylmalonyl-CoA during synthesis of propionate from tricarboxylic acid-cycle intermediates. This conversion most likely represents an important source of building blocks for polyketide antibiotic biosynthesis. It is unable to catalyze the conversion of isobutyryl-CoA into N-butyryl-CoA. The polypeptide is Methylmalonyl-CoA mutase large subunit (mutB) (Streptomyces virginiae (Streptomyces cinnamonensis)).